The sequence spans 338 residues: Probable tRNA pseudouridine synthase B (338 aa).

The active-site Nucleophile is Asp82. The 76-residue stretch at 250–325 folds into the PUA domain; sequence LPKVWIRDSA…IAVDVDKVFM (76 aa).

This sequence belongs to the pseudouridine synthase TruB family. Type 2 subfamily.

The enzyme catalyses uridine(55) in tRNA = pseudouridine(55) in tRNA. Functionally, could be responsible for synthesis of pseudouridine from uracil-55 in the psi GC loop of transfer RNAs. This is Probable tRNA pseudouridine synthase B from Thermococcus kodakarensis (strain ATCC BAA-918 / JCM 12380 / KOD1) (Pyrococcus kodakaraensis (strain KOD1)).